The chain runs to 330 residues: (11Z)-hexadec-11-enoyl-CoA conjugase (330 aa).

2 consecutive transmembrane segments (helical) span residues 37–57 and 65–85; these read IVVM…YGLY and LATS…ITAG. The Histidine box-1 signature appears at 87 to 92; the sequence is HRLWSH. The helical transmembrane segment at 101 to 121 threads the bilayer; the sequence is LEILLMVFNSIAFQNTIFTWV. Residues 124–128 carry the Histidine box-2 motif; the sequence is HRLHH. Helical transmembrane passes span 185–205 and 216–238; these read AIPF…MYFW and TVLR…HLWG. The short motif at 264–268 is the Histidine box-3 element; that stretch reads HNYHH.

Belongs to the fatty acid desaturase type 1 family. It depends on Fe(2+) as a cofactor. In terms of tissue distribution, highly expressed in the pheromone gland.

The protein resides in the membrane. It carries out the reaction an 11,12-saturated fatty acyl-CoA + 2 Fe(II)-[cytochrome b5] + O2 + 2 H(+) = an (11Z)-Delta(11)-fatty acyl-CoA + 2 Fe(III)-[cytochrome b5] + 2 H2O. The catalysed reaction is (11Z)-hexadecenoyl-CoA + AH2 + O2 = (10E,12Z)-hexadecadienoyl-CoA + A + 2 H2O. Functionally, fatty acid desaturase that catalyzes 2 consecutive steps in the biosynthesis of bombykol, a sex pheromone produced by the moth. First acts as an acyl-CoA Delta(11) desaturase (1) by catalyzing the formation of Delta(11) fatty acyl precursors. Then acts as a (11Z)-hexadec-11-enoyl-CoA conjugase (2) by converting a single cis double bond at position 11 of (11Z)-hexadec-11-enoyl-CoA into conjugated 10 trans and 12 cis double bonds. The polypeptide is (11Z)-hexadec-11-enoyl-CoA conjugase (Bombyx mori (Silk moth)).